The sequence spans 122 residues: Succinate dehydrogenase assembly factor 2, mitochondrial (122 aa).

Belongs to the SDHAF2 family. Interacts with the flavoprotein subunit within the SDH catalytic dimer.

It is found in the mitochondrion matrix. Functionally, plays an essential role in the assembly of succinate dehydrogenase (SDH), an enzyme complex (also referred to as respiratory complex II) that is a component of both the tricarboxylic acid (TCA) cycle and the mitochondrial electron transport chain, and which couples the oxidation of succinate to fumarate with the reduction of ubiquinone (coenzyme Q) to ubiquinol. Required for flavinylation (covalent attachment of FAD) of the flavoprotein subunit of the SDH catalytic dimer. This Caenorhabditis briggsae protein is Succinate dehydrogenase assembly factor 2, mitochondrial.